A 504-amino-acid polypeptide reads, in one-letter code: Cytochrome P450 2D1 (504 aa).

Heme is bound at residue cysteine 446.

The protein belongs to the cytochrome P450 family. It depends on heme as a cofactor.

It localises to the endoplasmic reticulum membrane. The protein localises to the microsome membrane. It carries out the reaction an organic molecule + reduced [NADPH--hemoprotein reductase] + O2 = an alcohol + oxidized [NADPH--hemoprotein reductase] + H2O + H(+). Its function is as follows. Cytochromes P450 are a group of heme-thiolate monooxygenases. In liver microsomes, this enzyme is involved in an NADPH-dependent electron transport pathway. It oxidizes a variety of structurally unrelated compounds, including steroids, fatty acids, and xenobiotics. This chain is Cytochrome P450 2D1 (Cyp2d1), found in Rattus norvegicus (Rat).